The sequence spans 845 residues: Protein SPA1-RELATED 3 (845 aa).

The segment covering 1–19 (MEGSSNSNSRGFNTSGVSD) has biased composition (polar residues). Disordered regions lie at residues 1–33 (MEGS…LTTR) and 139–158 (CSDS…KEIG). Residues 1–297 (MEGSSNSNSR…MSDLLQSEFI (297 aa)) form the Protein kinase domain. A coiled-coil region spans residues 301–329 (RDNLEEREAAIELRDRIEEQESLLEFLLL). 7 WD repeats span residues 532-571 (NSSN…NDNR), 581-621 (AGRS…LVTE), 624-664 (EHKK…SIGT), 666-706 (KTKA…IPLC), 710-748 (GHSK…SGIN), 757-796 (GHTN…PVMS), and 812-845 (DASQ…EMMT). The DWD box motif lies at 685–699 (AFGSADHKVYYYDLR).

As to quaternary structure, interacts with COP1 and CO.

It is found in the nucleus. Functionally, repressor of photomorphogenesis in the light. Probably part of the COP1/SPA E3 ubiquitin-protein ligase complex. This Arabidopsis thaliana (Mouse-ear cress) protein is Protein SPA1-RELATED 3 (SPA3).